The sequence spans 145 residues: Small ribosomal subunit protein eS12A (145 aa).

It belongs to the eukaryotic ribosomal protein eS12 family. In terms of assembly, component of the small ribosomal subunit (SSU). Mature yeast ribosomes consist of a small (40S) and a large (60S) subunit. The 40S small subunit contains 1 molecule of ribosomal RNA (18S rRNA) and at least 33 different proteins. The large 60S subunit contains 3 rRNA molecules (25S, 5.8S and 5S rRNA) and at least 46 different proteins.

The protein localises to the cytoplasm. In terms of biological role, component of the ribosome, a large ribonucleoprotein complex responsible for the synthesis of proteins in the cell. The small ribosomal subunit (SSU) binds messenger RNAs (mRNAs) and translates the encoded message by selecting cognate aminoacyl-transfer RNA (tRNA) molecules. The large subunit (LSU) contains the ribosomal catalytic site termed the peptidyl transferase center (PTC), which catalyzes the formation of peptide bonds, thereby polymerizing the amino acids delivered by tRNAs into a polypeptide chain. The nascent polypeptides leave the ribosome through a tunnel in the LSU and interact with protein factors that function in enzymatic processing, targeting, and the membrane insertion of nascent chains at the exit of the ribosomal tunnel. This is Small ribosomal subunit protein eS12A (rps1201) from Schizosaccharomyces pombe (strain 972 / ATCC 24843) (Fission yeast).